Consider the following 372-residue polypeptide: Alanine racemase (372 aa).

K36 acts as the Proton acceptor; specific for D-alanine in catalysis. An N6-(pyridoxal phosphate)lysine modification is found at K36. R134 is a substrate binding site. The active-site Proton acceptor; specific for L-alanine is Y266. Residue M314 coordinates substrate.

Belongs to the alanine racemase family. It depends on pyridoxal 5'-phosphate as a cofactor.

The enzyme catalyses L-alanine = D-alanine. Its pathway is amino-acid biosynthesis; D-alanine biosynthesis; D-alanine from L-alanine: step 1/1. Functionally, catalyzes the interconversion of L-alanine and D-alanine. May also act on other amino acids. This Nitratidesulfovibrio vulgaris (strain DSM 19637 / Miyazaki F) (Desulfovibrio vulgaris) protein is Alanine racemase (alr).